The chain runs to 275 residues: Chemotaxis protein methyltransferase Cher2 (275 aa).

A CheR-type methyltransferase domain is found at 1-275 (MSTGNLDFEQ…CSPGIIYQAK (275 aa)). Residues Asn73, Thr75, Arg79, Glu116, Asp145, 201 to 202 (NL), and 218 to 219 (RN) each bind S-adenosyl-L-methionine.

In terms of assembly, monomer.

The enzyme catalyses L-glutamyl-[protein] + S-adenosyl-L-methionine = [protein]-L-glutamate 5-O-methyl ester + S-adenosyl-L-homocysteine. In terms of biological role, methylation of the membrane-bound methyl-accepting chemotaxis proteins (MCP) to form gamma-glutamyl methyl ester residues in MCP. Methylates the McpS chemotaxis receptor. The polypeptide is Chemotaxis protein methyltransferase Cher2 (cheR2) (Pseudomonas putida (strain ATCC 47054 / DSM 6125 / CFBP 8728 / NCIMB 11950 / KT2440)).